The following is a 268-amino-acid chain: Tryptophan synthase alpha chain (268 aa).

Catalysis depends on proton acceptor residues Glu-49 and Asp-60.

The protein belongs to the TrpA family. Tetramer of two alpha and two beta chains.

It carries out the reaction (1S,2R)-1-C-(indol-3-yl)glycerol 3-phosphate + L-serine = D-glyceraldehyde 3-phosphate + L-tryptophan + H2O. It functions in the pathway amino-acid biosynthesis; L-tryptophan biosynthesis; L-tryptophan from chorismate: step 5/5. Functionally, the alpha subunit is responsible for the aldol cleavage of indoleglycerol phosphate to indole and glyceraldehyde 3-phosphate. The sequence is that of Tryptophan synthase alpha chain from Erwinia tasmaniensis (strain DSM 17950 / CFBP 7177 / CIP 109463 / NCPPB 4357 / Et1/99).